The primary structure comprises 163 residues: MAKESSFDIVSKVELPEVQNAVQAALKEIKNRYDFKGSKSDISLEKEELVLISDDDFKLEQLKDVLVTKLIKRNVPTKNIDYGKTEHALGGTVRQRAKLISGIDQDNAKKINALIKQSGIKVKSQFQDDQVRVTGKNKDDLQEVISLMRKADLPIDVQFINFR.

Belongs to the YajQ family.

In terms of biological role, nucleotide-binding protein. The polypeptide is Nucleotide-binding protein BPUM_1028 (Bacillus pumilus (strain SAFR-032)).